The following is a 330-amino-acid chain: Ferrochelatase (330 aa).

Positions 200 and 281 each coordinate Fe cation.

The protein belongs to the ferrochelatase family.

The protein localises to the cytoplasm. It catalyses the reaction heme b + 2 H(+) = protoporphyrin IX + Fe(2+). The protein operates within porphyrin-containing compound metabolism; protoheme biosynthesis; protoheme from protoporphyrin-IX: step 1/1. In terms of biological role, catalyzes the ferrous insertion into protoporphyrin IX. The protein is Ferrochelatase of Marinomonas sp. (strain MWYL1).